A 504-amino-acid chain; its full sequence is MTQTNGFDALHAHAQRLRGAAIPALLAAEPERPTQYARQVGPLYFNFARQKYDRAALDALFAIARERDLSGAFQRLFRGEQVNVTEQRAALHTALRGDLTDAPVASEAYATAEEVRQRMGSLIQQLEATDVTDIVSVGIGGSDLGPRLVADALRAPSGARFRVHFVSNVDGAAMQRTLATLDPARTAGILISKTFGTQETLLNGSILHAWLGGSERLYAVSANPERAAKAFDIAPGRVLPMWDWVGGRYSLWSAVGFPIALAIGFERFEQLLEGAAQFDAHVLNTPLEENVAVLHGLTAVWNRNLLGSATHAVMTYDQRLALLPAYLQQLVMESLGKRVKLDGSAVDSDTVSVWWGGAGTDVQHSFFQALHQGTSVVPADFIGTVHNDDPYAENHTALMANVLAQTEALANGQDSSDPHRSYPGGRPSTVILLDALTPQALGALISMYEHSVYVQSVMWGINAFDQFGVELGKQLASQLLPALKGESVDVADPVTRELLNKLRG.

E333 (proton donor) is an active-site residue. Catalysis depends on residues H364 and K473.

This sequence belongs to the GPI family.

The protein localises to the cytoplasm. The catalysed reaction is alpha-D-glucose 6-phosphate = beta-D-fructose 6-phosphate. It functions in the pathway carbohydrate biosynthesis; gluconeogenesis. The protein operates within carbohydrate degradation; glycolysis; D-glyceraldehyde 3-phosphate and glycerone phosphate from D-glucose: step 2/4. Catalyzes the reversible isomerization of glucose-6-phosphate to fructose-6-phosphate. This is Glucose-6-phosphate isomerase from Xanthomonas axonopodis pv. citri (strain 306).